The primary structure comprises 284 residues: RNase adapter protein RapZ (284 aa).

8 to 15 is a binding site for ATP; sequence GRSGSGKS. 56 to 59 is a GTP binding site; that stretch reads DVRN. The RNA-binding stretch occupies residues 266–284; sequence RSRGKNVQSRHRTLEKRRS.

Belongs to the RapZ-like family. RapZ subfamily. In terms of assembly, homotrimer.

Functionally, modulates the synthesis of GlmS, by affecting the processing and stability of the regulatory small RNA GlmZ. When glucosamine-6-phosphate (GlcN6P) concentrations are high in the cell, RapZ binds GlmZ and targets it to cleavage by RNase E. Consequently, GlmZ is inactivated and unable to activate GlmS synthesis. Under low GlcN6P concentrations, RapZ is sequestered and inactivated by an other regulatory small RNA, GlmY, preventing GlmZ degradation and leading to synthesis of GlmS. This is RNase adapter protein RapZ from Erwinia tasmaniensis (strain DSM 17950 / CFBP 7177 / CIP 109463 / NCPPB 4357 / Et1/99).